Here is a 243-residue protein sequence, read N- to C-terminus: PHO85 cyclin-like protein psl1 (243 aa).

The span at Glu-211 to Asp-224 shows a compositional bias: polar residues. The tract at residues Glu-211–Ile-231 is disordered.

It belongs to the cyclin family. PHO80 subfamily. Forms a cyclin-CDK complex with pef1.

The protein localises to the cytoplasm. It is found in the nucleus. Its function is as follows. Cyclin partner of the cyclin-dependent kinase (CDK) pef1 (PHO85 homolog). This is PHO85 cyclin-like protein psl1 (psl1) from Schizosaccharomyces pombe (strain 972 / ATCC 24843) (Fission yeast).